Consider the following 186-residue polypeptide: Transposon Tn21 resolvase (186 aa).

In terms of domain architecture, Resolvase/invertase-type recombinase catalytic spans 4–137; it reads QRIGYIRVST…EGIALAKQRG (134 aa). Serine 12 functions as the O-(5'-phospho-DNA)-serine intermediate in the catalytic mechanism. Residues 164–183 constitute a DNA-binding region (H-T-H motif); the sequence is KTKLAREFGISRETLYQYLR.

This sequence belongs to the site-specific recombinase resolvase family.

Functionally, resolvase catalyzes the resolution (a site-specific recombination) of the cointegrated replicon to yield the final transposition products. This Escherichia coli protein is Transposon Tn21 resolvase (tnpR).